Here is a 359-residue protein sequence, read N- to C-terminus: MDQLISQLNFKSHNSIIHSVDSIGDDTCYVLDLSVTPNLLAAAGSNYLIKIYDRSNNTILNVLSGHKDAINETKFIENTNTLLSCSSDKTVKIWDTKTGQCSQTINQQGEIFSIDLNGDILAMGVGSMVVLYNLSTKKMIRKFDCSHTEDVTRVRFHPIDKNKLVSCSVDGLICMYDLEQADDDDAIVHVINAEDSIGNIGFFGSAYQYLYTLSHTERLATWDLTTGLKIKHYGADLRSTLSDRYKFEINYFISCIYDNASNQLILFGGDFNGTGHVFLVTPDEVIQISKLENVHTDVIRNVFWDKFKSELITSSEDSKIGFWTNNPSITNILKINNDTSSNKMKDDKLKSKKTSPYNK.

WD repeat units follow at residues 23–62 (IGDDTCYVLDLSVTPNLLAAAGSNYLIKIYDRSNNTILNV), 65–104 (GHKDAINETKFIENTNTLLSCSSDKTVKIWDTKTGQCSQT), 106–144 (NQQGEIFSIDLNGDILAMGVGSMVVLYNLSTKKMIRKFD), 146–186 (SHTE…DDDA), 192–232 (NAED…KIKH), and 294–333 (VHTDVIRNVFWDKFKSELITSSEDSKIGFWTNNPSITNIL).

The chain is WD repeat-containing protein 89 homolog (wdr89) from Dictyostelium discoideum (Social amoeba).